We begin with the raw amino-acid sequence, 190 residues long: Putative manganese efflux pump MntP (190 aa).

6 consecutive transmembrane segments (helical) span residues 3–23, 39–59, 65–85, 106–128, 133–155, and 157–177; these read PASI…AAVG, IGLI…FIGQ, VANW…LHMI, WLLA…GLAF, IWVA…VMLG, and AIGT…LIIV.

It belongs to the MntP (TC 9.B.29) family.

The protein localises to the cell inner membrane. Functionally, probably functions as a manganese efflux pump. This chain is Putative manganese efflux pump MntP, found in Pseudomonas fluorescens (strain ATCC BAA-477 / NRRL B-23932 / Pf-5).